Here is a 494-residue protein sequence, read N- to C-terminus: Ketol-acid reductoisomerase (NADP(+)) (494 aa).

One can recognise a KARI N-terminal Rossmann domain in the interval 14 to 208; that stretch reads LDQLGRCRFM…GGHRAGCLES (195 aa). NADP(+)-binding positions include 45–48, Arg-68, Arg-76, Ser-78, and 108–110; these read CGAQ and DKQ. Residue His-132 is part of the active site. Gly-158 contacts NADP(+). KARI C-terminal knotted domains are found at residues 209 to 344 and 345 to 487; these read SFVA…NYPD and SSLE…MTDM. Asp-217, Glu-221, Glu-389, and Glu-393 together coordinate Mg(2+). Residue Ser-414 coordinates substrate.

This sequence belongs to the ketol-acid reductoisomerase family. Mg(2+) serves as cofactor.

The catalysed reaction is (2R)-2,3-dihydroxy-3-methylbutanoate + NADP(+) = (2S)-2-acetolactate + NADPH + H(+). It carries out the reaction (2R,3R)-2,3-dihydroxy-3-methylpentanoate + NADP(+) = (S)-2-ethyl-2-hydroxy-3-oxobutanoate + NADPH + H(+). It functions in the pathway amino-acid biosynthesis; L-isoleucine biosynthesis; L-isoleucine from 2-oxobutanoate: step 2/4. The protein operates within amino-acid biosynthesis; L-valine biosynthesis; L-valine from pyruvate: step 2/4. Its function is as follows. Involved in the biosynthesis of branched-chain amino acids (BCAA). Catalyzes an alkyl-migration followed by a ketol-acid reduction of (S)-2-acetolactate (S2AL) to yield (R)-2,3-dihydroxy-isovalerate. In the isomerase reaction, S2AL is rearranged via a Mg-dependent methyl migration to produce 3-hydroxy-3-methyl-2-ketobutyrate (HMKB). In the reductase reaction, this 2-ketoacid undergoes a metal-dependent reduction by NADPH to yield (R)-2,3-dihydroxy-isovalerate. In Aliivibrio salmonicida (strain LFI1238) (Vibrio salmonicida (strain LFI1238)), this protein is Ketol-acid reductoisomerase (NADP(+)).